We begin with the raw amino-acid sequence, 156 residues long: Ribosomal RNA large subunit methyltransferase H (156 aa).

S-adenosyl-L-methionine-binding positions include Leu-73, Gly-104, and 123–128 (VSSLTL).

The protein belongs to the RNA methyltransferase RlmH family. As to quaternary structure, homodimer.

The protein resides in the cytoplasm. The enzyme catalyses pseudouridine(1915) in 23S rRNA + S-adenosyl-L-methionine = N(3)-methylpseudouridine(1915) in 23S rRNA + S-adenosyl-L-homocysteine + H(+). In terms of biological role, specifically methylates the pseudouridine at position 1915 (m3Psi1915) in 23S rRNA. The protein is Ribosomal RNA large subunit methyltransferase H of Paraburkholderia xenovorans (strain LB400).